A 420-amino-acid polypeptide reads, in one-letter code: Anaerobic glycerol-3-phosphate dehydrogenase subunit B (420 aa).

Belongs to the anaerobic G-3-P dehydrogenase subunit B family. In terms of assembly, composed of a catalytic GlpA/B dimer and of membrane bound GlpC. FMN serves as cofactor.

The catalysed reaction is a quinone + sn-glycerol 3-phosphate = dihydroxyacetone phosphate + a quinol. It functions in the pathway polyol metabolism; glycerol degradation via glycerol kinase pathway; glycerone phosphate from sn-glycerol 3-phosphate (anaerobic route): step 1/1. Its function is as follows. Conversion of glycerol 3-phosphate to dihydroxyacetone. Uses fumarate or nitrate as electron acceptor. This Pectobacterium atrosepticum (strain SCRI 1043 / ATCC BAA-672) (Erwinia carotovora subsp. atroseptica) protein is Anaerobic glycerol-3-phosphate dehydrogenase subunit B.